Consider the following 221-residue polypeptide: Ras-related protein Rab-27A (221 aa).

Ser2 bears the N-acetylserine mark. Ser2 carries the phosphoserine modification. Position 16 to 24 (16 to 24 (GDSGVGKTS)) interacts with GTP. Positions 38 to 46 (FITTVGIDF) match the Effector region motif. GTP contacts are provided by residues 74-78 (DTAGQ), 133-136 (NKSD), and 163-165 (SAA). The cysteines at positions 123 and 188 are disulfide-linked. S-geranylgeranyl cysteine attachment occurs at residues Cys219 and Cys221. At Cys221 the chain carries Cysteine methyl ester.

This sequence belongs to the small GTPase superfamily. Rab family. As to quaternary structure, binds SYTL1, SLAC2B, MYRIP, SYTL3, SYTL4 and SYTL5. Interacts with RPH3A and RPH3A. Binds MLPH and SYTL2. Interacts with UNC13D. Does not interact with the BLOC-3 complex (heterodimer of HPS1 and HPS4). Interacts (GDP-bound form preferentially) with DENND10. As to expression, high levels in eye, intestine, lung, pancreas and spleen, and low or absent in brain, liver, heart, kidney, and skeletal muscle.

The protein localises to the membrane. Its subcellular location is the melanosome. The protein resides in the late endosome. It localises to the lysosome. It catalyses the reaction GTP + H2O = GDP + phosphate + H(+). Regulated by guanine nucleotide exchange factors (GEFs) which promote the exchange of bound GDP for free GTP, GTPase activating proteins (GAPs) which increase the GTP hydrolysis activity, and GDP dissociation inhibitors which inhibit the dissociation of the nucleotide from the GTPase. Activated by GEFs such as DENND10. Small GTPase which cycles between active GTP-bound and inactive GDP-bound states. In its active state, binds to a variety of effector proteins to regulate homeostasis of late endocytic pathway, including endosomal positioning, maturation and secretion. Plays a role in cytotoxic granule exocytosis in lymphocytes. Required for both granule maturation and granule docking and priming at the immunologic synapse. This is Ras-related protein Rab-27A (Rab27a) from Rattus norvegicus (Rat).